Consider the following 159-residue polypeptide: Eukaryotic translation initiation factor 5A-5 (159 aa).

A compositionally biased stretch (basic and acidic residues) spans 1 to 12 (MSDEEHHFESKA). The disordered stretch occupies residues 1-23 (MSDEEHHFESKADAGASKTYPQQ). A Hypusine modification is found at K52.

It belongs to the eIF-5A family. Post-translationally, lys-52 undergoes hypusination, a unique post-translational modification that consists in the addition of a butylamino group from spermidine to lysine side chain, leading to the formation of the unusual amino acid hypusine. eIF-5As are the only known proteins to undergo this modification, which is essential for their function.

In terms of biological role, translation factor that promotes translation elongation and termination, particularly upon ribosome stalling at specific amino acid sequence contexts. Binds between the exit (E) and peptidyl (P) site of the ribosome and promotes rescue of stalled ribosome: specifically required for efficient translation of polyproline-containing peptides as well as other motifs that stall the ribosome. Acts as a ribosome quality control (RQC) cofactor by joining the RQC complex to facilitate peptidyl transfer during CAT tailing step. In Solanum tuberosum (Potato), this protein is Eukaryotic translation initiation factor 5A-5 (EIF5A5).